A 140-amino-acid chain; its full sequence is Arsenate reductase ArsI2 (140 aa).

The active-site Nucleophile; cysteine thioarsenate intermediate is the Cys-10.

The protein belongs to the ArsC family.

It carries out the reaction [glutaredoxin]-dithiol + arsenate + glutathione + H(+) = glutathionyl-S-S-[glutaredoxin] + arsenite + H2O. Catalyzes the reduction of arsenate [As(V)] to arsenite [As(III)]. Does not constitute the major arsenate reductase in cells: essential only in the absence of ArsC (AC P74313). The polypeptide is Arsenate reductase ArsI2 (Synechocystis sp. (strain ATCC 27184 / PCC 6803 / Kazusa)).